We begin with the raw amino-acid sequence, 389 residues long: Succinate--CoA ligase [ADP-forming] subunit beta (389 aa).

Positions 9–236 (RDLFEKHGVP…KTTADPLEEK (228 aa)) constitute an ATP-grasp domain. Residues lysine 45, 52–54 (GRG), alanine 94, and glutamate 99 contribute to the ATP site. Mg(2+)-binding residues include asparagine 191 and aspartate 205. Substrate contacts are provided by residues asparagine 256 and 318–320 (GIT).

The protein belongs to the succinate/malate CoA ligase beta subunit family. In terms of assembly, heterotetramer of two alpha and two beta subunits. It depends on Mg(2+) as a cofactor.

It catalyses the reaction succinate + ATP + CoA = succinyl-CoA + ADP + phosphate. The enzyme catalyses GTP + succinate + CoA = succinyl-CoA + GDP + phosphate. Its pathway is carbohydrate metabolism; tricarboxylic acid cycle; succinate from succinyl-CoA (ligase route): step 1/1. Functionally, succinyl-CoA synthetase functions in the citric acid cycle (TCA), coupling the hydrolysis of succinyl-CoA to the synthesis of either ATP or GTP and thus represents the only step of substrate-level phosphorylation in the TCA. The beta subunit provides nucleotide specificity of the enzyme and binds the substrate succinate, while the binding sites for coenzyme A and phosphate are found in the alpha subunit. This is Succinate--CoA ligase [ADP-forming] subunit beta from Kocuria rhizophila (strain ATCC 9341 / DSM 348 / NBRC 103217 / DC2201).